Consider the following 211-residue polypeptide: Imidazole glycerol phosphate synthase subunit HisH (211 aa).

The Glutamine amidotransferase type-1 domain occupies 3 to 211 (VIAVIDYDMG…VNQIRVKAIA (209 aa)). The active-site Nucleophile is C81. Catalysis depends on residues H186 and E188.

In terms of assembly, heterodimer of HisH and HisF.

Its subcellular location is the cytoplasm. The catalysed reaction is 5-[(5-phospho-1-deoxy-D-ribulos-1-ylimino)methylamino]-1-(5-phospho-beta-D-ribosyl)imidazole-4-carboxamide + L-glutamine = D-erythro-1-(imidazol-4-yl)glycerol 3-phosphate + 5-amino-1-(5-phospho-beta-D-ribosyl)imidazole-4-carboxamide + L-glutamate + H(+). It catalyses the reaction L-glutamine + H2O = L-glutamate + NH4(+). The protein operates within amino-acid biosynthesis; L-histidine biosynthesis; L-histidine from 5-phospho-alpha-D-ribose 1-diphosphate: step 5/9. IGPS catalyzes the conversion of PRFAR and glutamine to IGP, AICAR and glutamate. The HisH subunit catalyzes the hydrolysis of glutamine to glutamate and ammonia as part of the synthesis of IGP and AICAR. The resulting ammonia molecule is channeled to the active site of HisF. This is Imidazole glycerol phosphate synthase subunit HisH from Gloeothece citriformis (strain PCC 7424) (Cyanothece sp. (strain PCC 7424)).